A 333-amino-acid polypeptide reads, in one-letter code: Glycerol-3-phosphate dehydrogenase [NAD(P)+] (333 aa).

4 residues coordinate NADPH: serine 13, tyrosine 14, arginine 34, and lysine 108. Residues lysine 108, glycine 137, and threonine 139 each coordinate sn-glycerol 3-phosphate. Alanine 141 is a binding site for NADPH. Positions 193, 246, 256, 257, and 258 each coordinate sn-glycerol 3-phosphate. Lysine 193 acts as the Proton acceptor in catalysis. Position 257 (arginine 257) interacts with NADPH. NADPH is bound at residue glutamate 283.

It belongs to the NAD-dependent glycerol-3-phosphate dehydrogenase family.

Its subcellular location is the cytoplasm. The catalysed reaction is sn-glycerol 3-phosphate + NAD(+) = dihydroxyacetone phosphate + NADH + H(+). It catalyses the reaction sn-glycerol 3-phosphate + NADP(+) = dihydroxyacetone phosphate + NADPH + H(+). Its pathway is membrane lipid metabolism; glycerophospholipid metabolism. Catalyzes the reduction of the glycolytic intermediate dihydroxyacetone phosphate (DHAP) to sn-glycerol 3-phosphate (G3P), the key precursor for phospholipid synthesis. In Idiomarina loihiensis (strain ATCC BAA-735 / DSM 15497 / L2-TR), this protein is Glycerol-3-phosphate dehydrogenase [NAD(P)+].